A 90-amino-acid polypeptide reads, in one-letter code: Envelope protein US9 (90 aa).

Residues 1–67 (MTSRLSDPNS…RRRRTRCVGM (67 aa)) lie on the Intravirion side of the membrane. An Internalization motif motif is present at residues 21–24 (YPTA). Residues 30 to 39 (EAYYSESEDE) form an acidic region. Residues S34 and S36 each carry the phosphoserine; by host CK2 modification. Residues 68–88 (VIACLLVAVLSGGFGALLMWL) traverse the membrane as a helical; Signal-anchor for type II membrane protein segment. Residues 89 to 90 (LR) are Virion surface-facing.

It belongs to the alphaherpesvirinae envelope protein US9 family. Post-translationally, phosphorylated on serines within the acidic cluster, possibly by host CK2. Phosphorylation determines whether endocytosed viral US9 traffics to the trans-Golgi network or recycles to the cell membrane.

It is found in the virion membrane. The protein resides in the host Golgi apparatus membrane. The protein localises to the host smooth endoplasmic reticulum membrane. It localises to the host cell membrane. Its function is as follows. Essential for the anterograde spread of the infection throughout the host nervous system. Together with the gE/gI heterodimer, US9 is involved in the sorting and transport of viral structural components toward axon tips. This Homo sapiens (Human) protein is Envelope protein US9.